Reading from the N-terminus, the 513-residue chain is CUGBP Elav-like family member 2 (513 aa).

RRM domains lie at 35 to 118 (IKMF…PADS), 127 to 207 (RKLF…FADT), and 428 to 506 (ANLF…LKRS).

Belongs to the CELF/BRUNOL family.

The protein resides in the nucleus. It localises to the cytoplasm. In terms of biological role, RNA-binding protein implicated in the regulation of several post-transcriptional events. May be involved in pre-mRNA alternative splicing, mRNA translation repression and stability. The sequence is that of CUGBP Elav-like family member 2 (celf2) from Xenopus tropicalis (Western clawed frog).